Reading from the N-terminus, the 440-residue chain is Chromosome partition protein MukF (440 aa).

A leucine-zipper region spans residues 208–236 (LSETSGTLRELQDTLEAAGDKLQANLLRI).

The protein belongs to the MukF family. Interacts, and probably forms a ternary complex, with MukE and MukB via its C-terminal region. The complex formation is stimulated by calcium or magnesium. It is required for an interaction between MukE and MukB.

It is found in the cytoplasm. The protein localises to the nucleoid. Its function is as follows. Involved in chromosome condensation, segregation and cell cycle progression. May participate in facilitating chromosome segregation by condensation DNA from both sides of a centrally located replisome during cell division. Not required for mini-F plasmid partitioning. Probably acts via its interaction with MukB and MukE. Overexpression results in anucleate cells. It has a calcium binding activity. In Escherichia fergusonii (strain ATCC 35469 / DSM 13698 / CCUG 18766 / IAM 14443 / JCM 21226 / LMG 7866 / NBRC 102419 / NCTC 12128 / CDC 0568-73), this protein is Chromosome partition protein MukF.